A 472-amino-acid chain; its full sequence is Pyruvate kinase (472 aa).

A substrate-binding site is contributed by R33. K(+)-binding residues include N35, S37, and D67. ATP is bound at residue 35–38 (NFSH). Residues R74 and K155 each coordinate ATP. Residue E220 coordinates Mg(2+). 3 residues coordinate substrate: G243, D244, and T276. Residue D244 coordinates Mg(2+).

Belongs to the pyruvate kinase family. In terms of assembly, homotetramer. Requires Mg(2+) as cofactor. It depends on K(+) as a cofactor.

The enzyme catalyses pyruvate + ATP = phosphoenolpyruvate + ADP + H(+). It functions in the pathway carbohydrate degradation; glycolysis; pyruvate from D-glyceraldehyde 3-phosphate: step 5/5. This Mycobacterium intracellulare protein is Pyruvate kinase (pyk).